The following is a 731-amino-acid chain: Elongation factor 2 (731 aa).

Positions 19 to 234 (EYIRNIGICA…DIIDYCNEGK (216 aa)) constitute a tr-type G domain. Residues 28–35 (AHIDHGKT), 94–98 (DTPGH), and 148–151 (NKVD) each bind GTP. His598 bears the Diphthamide mark.

Belongs to the TRAFAC class translation factor GTPase superfamily. Classic translation factor GTPase family. EF-G/EF-2 subfamily.

The protein resides in the cytoplasm. In terms of biological role, catalyzes the GTP-dependent ribosomal translocation step during translation elongation. During this step, the ribosome changes from the pre-translocational (PRE) to the post-translocational (POST) state as the newly formed A-site-bound peptidyl-tRNA and P-site-bound deacylated tRNA move to the P and E sites, respectively. Catalyzes the coordinated movement of the two tRNA molecules, the mRNA and conformational changes in the ribosome. The polypeptide is Elongation factor 2 (Methanobrevibacter ruminantium (strain ATCC 35063 / DSM 1093 / JCM 13430 / OCM 146 / M1) (Methanobacterium ruminantium)).